Reading from the N-terminus, the 437-residue chain is Immunoglobulin superfamily member 11 (437 aa).

The signal sequence occupies residues 1-22 (MTCRGSPLAPLLLFSLHGVAAS). The 114-residue stretch at 23–136 (LEVSESPGSV…DRGGRNIGVT (114 aa)) folds into the Ig-like V-type domain. The Extracellular portion of the chain corresponds to 23–241 (LEVSESPGSV…VISPQPRSIG (219 aa)). Disulfide bonds link Cys44–Cys120 and Cys165–Cys215. Asn102 is a glycosylation site (N-linked (GlcNAc...) asparagine). Positions 144–234 (PSAPHCQIQG…TCLLDLQVIS (91 aa)) constitute an Ig-like C2-type domain. Residues 242–262 (LIAGAIGTGAVIIIFCIALIL) form a helical membrane-spanning segment. Residues 263 to 437 (GAFFYWRSKN…PAQSRAGSLV (175 aa)) lie on the Cytoplasmic side of the membrane. The residue at position 379 (Arg379) is an Omega-N-methylarginine. A disordered region spans residues 382–405 (SLPAVSRSNGSVSRKARPPPVPSL).

Post-translationally, N-glycosylated.

The protein localises to the cell membrane. In terms of biological role, functions as a cell adhesion molecule through homophilic interaction. Stimulates cell growth. The polypeptide is Immunoglobulin superfamily member 11 (IGSF11) (Bos taurus (Bovine)).